The chain runs to 343 residues: Dehydrodolichyl diphosphate synthase complex subunit SRT1 (343 aa).

This sequence belongs to the UPP synthase family. Forms an active dehydrodolichyl diphosphate synthase complex with NUS1. Requires Mg(2+) as cofactor.

It is found in the lipid droplet. The enzyme catalyses n isopentenyl diphosphate + (2E,6E)-farnesyl diphosphate = a di-trans,poly-cis-polyprenyl diphosphate + n diphosphate. The protein operates within protein modification; protein glycosylation. Its function is as follows. With NUS1, forms the dehydrodolichyl diphosphate synthase (DDS) complex, an essential component of the dolichol monophosphate (Dol-P) biosynthetic machinery. Adds multiple copies of isopentenyl pyrophosphate (IPP) to farnesyl pyrophosphate (FPP) to produce dehydrodolichyl diphosphate (Dedol-PP), a precursor of dolichol which is utilized as a sugar carrier in protein glycosylation in the endoplasmic reticulum (ER). The protein is Dehydrodolichyl diphosphate synthase complex subunit SRT1 of Saccharomyces cerevisiae (strain ATCC 204508 / S288c) (Baker's yeast).